The sequence spans 411 residues: tRNA pseudouridine synthase Pus10 (411 aa).

Residues 65–192 (ALAKCHLPTR…SGQVKVVRNP (128 aa)) form the THUMP domain. The active-site Nucleophile is Asp244. Positions 305 and 376 each coordinate substrate.

Belongs to the pseudouridine synthase Pus10 family.

It carries out the reaction uridine(54) in tRNA = pseudouridine(54) in tRNA. The catalysed reaction is uridine(55) in tRNA = pseudouridine(55) in tRNA. Responsible for synthesis of pseudouridine from uracil-54 and uracil-55 in the psi GC loop of transfer RNAs. The sequence is that of tRNA pseudouridine synthase Pus10 from Pyrobaculum arsenaticum (strain DSM 13514 / JCM 11321 / PZ6).